The sequence spans 129 residues: Large ribosomal subunit protein bL12 (129 aa).

The protein belongs to the bacterial ribosomal protein bL12 family. As to quaternary structure, homodimer. Part of the ribosomal stalk of the 50S ribosomal subunit. Forms a multimeric L10(L12)X complex, where L10 forms an elongated spine to which 2 to 4 L12 dimers bind in a sequential fashion. Binds GTP-bound translation factors.

In terms of biological role, forms part of the ribosomal stalk which helps the ribosome interact with GTP-bound translation factors. Is thus essential for accurate translation. In Thermosipho melanesiensis (strain DSM 12029 / CIP 104789 / BI429), this protein is Large ribosomal subunit protein bL12.